Consider the following 284-residue polypeptide: Serine protease 57 (284 aa).

Residues Met1–Cys35 form the signal peptide. One can recognise a Peptidase S1 domain in the interval Ile40–Arg269. Cys65 and Cys81 are disulfide-bonded. Catalysis depends on charge relay system residues His80 and Asp128. Asn135 is a glycosylation site (N-linked (GlcNAc...) asparagine). Disulfide bonds link Cys163-Cys230, Cys194-Cys208, and Cys220-Cys245. Ser224 acts as the Charge relay system in catalysis.

This sequence belongs to the peptidase S1 family. Post-translationally, after cleavage of the signal peptide, the N-terminus is probably further processed by CTSC. Processing by CTSC is probably required for accumulation in cytoplasmic granules; in the absence of CTSC the protein does not accumulate. In terms of processing, N-glycosylated.

The protein localises to the cytoplasmic granule lumen. It localises to the secreted. In terms of biological role, serine protease that cleaves preferentially after Arg residues. Can also cleave after citrulline (deimidated arginine) and methylarginine residues. This chain is Serine protease 57 (Prss57), found in Mus musculus (Mouse).